A 153-amino-acid chain; its full sequence is Large ribosomal subunit protein bL9 (153 aa).

It belongs to the bacterial ribosomal protein bL9 family.

Its function is as follows. Binds to the 23S rRNA. This is Large ribosomal subunit protein bL9 from Micrococcus luteus (strain ATCC 4698 / DSM 20030 / JCM 1464 / CCM 169 / CCUG 5858 / IAM 1056 / NBRC 3333 / NCIMB 9278 / NCTC 2665 / VKM Ac-2230) (Micrococcus lysodeikticus).